We begin with the raw amino-acid sequence, 330 residues long: Succinylglutamate desuccinylase (330 aa).

3 residues coordinate Zn(2+): H53, E56, and H147. E210 is a catalytic residue.

Belongs to the AspA/AstE family. Succinylglutamate desuccinylase subfamily. Zn(2+) is required as a cofactor.

The enzyme catalyses N-succinyl-L-glutamate + H2O = L-glutamate + succinate. The protein operates within amino-acid degradation; L-arginine degradation via AST pathway; L-glutamate and succinate from L-arginine: step 5/5. Transforms N(2)-succinylglutamate into succinate and glutamate. This is Succinylglutamate desuccinylase from Yersinia enterocolitica serotype O:8 / biotype 1B (strain NCTC 13174 / 8081).